Reading from the N-terminus, the 839-residue chain is Thymine dioxygenase JBP1 (839 aa).

The interval 86 to 288 (KVCGVLIPKA…RLSCVFYYRA (203 aa)) is thymine dioxygenase. Fe cation-binding residues include His-213, Asp-215, and His-263. Arg-279 contributes to the 2-oxoglutarate binding site. Residues 415–583 (KGDILNEAMN…EIEQARRRAP (169 aa)) form a DNA-binding JBP1 domain region.

It belongs to the TET family. JBP1 subfamily. Monomer. Binds to DNA as a monomer. Fe(2+) serves as cofactor.

The protein resides in the nucleus. It catalyses the reaction thymine + 2-oxoglutarate + O2 = 5-hydroxymethyluracil + succinate + CO2. Functionally, dioxygenase that catalyzes the first step of DNA base J (beta-d-glucosyl-HOMedU) biosynthesis by converting thymine to 5-hydroxymethyluracil (HOMedU). DNA base J is a hypermodified thymidine residue found in the genome of kinetoplastid parasites, which is localized primarily to repetitive DNA, namely the telomeres, and is implicated in the regulation of antigenic variation. Also specifically binds to base J-containing DNA (J-DNA). Involved in propagation and maintenance of DNA base J synthesis initiated by JBP2 by specifically binding already synthesized DNA base J and propagating J synthesis. Thymine dioxygenase activity and J-DNA-binding are independent functions. This Trypanosoma brucei brucei (strain 927/4 GUTat10.1) protein is Thymine dioxygenase JBP1 (JBP1).